Here is a 1333-residue protein sequence, read N- to C-terminus: Cell division control protein 25 (1333 aa).

The disordered stretch occupies residues 1–27 (MSSANYISDEVPPDMVSPHDHRPSKDE). Residues 17–27 (SPHDHRPSKDE) are compositionally biased toward basic and acidic residues. In terms of domain architecture, SH3 spans 30-94 (KHLDTVIALY…PHNYVRSVNY (65 aa)). The span at 133-166 (LQESERNSPANSTRKNSVVSFASSETSMPSDSKY) shows a compositional bias: polar residues. Disordered regions lie at residues 133-206 (LQES…SSIS) and 474-497 (SSAF…STRF). Residues 167-176 (TQQQTNTNQN) are compositionally biased toward low complexity. Polar residues-rich tracts occupy residues 177–187 (SPEYQSISLPS) and 194–206 (VEMQ…SSIS). Positions 474–485 (SSAFQSPASSLS) are enriched in low complexity. Residues 900–1034 (VKGNIKGGSK…YLERLLRGER (135 aa)) enclose the N-terminal Ras-GEF domain. In terms of domain architecture, Ras-GEF spans 1068 to 1305 (DYVELARQLT…YQISLNLEPR (238 aa)).

In terms of biological role, promotes the exchange of Ras-bound GDP by GTP. This protein positively controls the level of cellular cAMP at start, the stage at which the yeast cell division cycle is triggered. This is Cell division control protein 25 (CDC25) from Candida albicans (strain SC5314 / ATCC MYA-2876) (Yeast).